The sequence spans 159 residues: MAGSGVLEVHLVDAKGLTGNDFLGEIGKIDPYVVVQYRSQERKSSVARDQGKNPSWNEVFKFQINSTAATGQHKLFLRLMDHDTFSRDDFLGEATINVTDLISLGMEHGTWEMSESKHRVVLADKTYHGEIRVSLTFTASAKAQDHAEQVGGWAHSFRQ.

The region spanning 1 to 112 (MAGSGVLEVH…SLGMEHGTWE (112 aa)) is the C2 domain. Positions 21 and 30 each coordinate Ca(2+). Ser-44 carries the post-translational modification Phosphoserine; by CPK. 4 residues coordinate Ca(2+): Asp-81, Asp-83, Ser-86, and Asp-89.

Ca(2+) is required as a cofactor. In terms of processing, phosphorylated at Ser-44 by CPK18 in a calcium-dependent manner. In terms of tissue distribution, isoform 2 is expressed in young vascular tissues and tiller buds.

Its subcellular location is the cytoplasm. The protein resides in the cell membrane. Functionally, may play a role in plant defense signaling. Isoform 2 binds to phospholipids in a Ca(2+)-dependent manner in response to pathogen elicitors. The protein is Elicitor-responsive protein 1 (ERG1) of Oryza sativa subsp. japonica (Rice).